The chain runs to 418 residues: Putative competence-damage inducible protein (418 aa).

The protein belongs to the CinA family.

The sequence is that of Putative competence-damage inducible protein from Clostridioides difficile (strain 630) (Peptoclostridium difficile).